The sequence spans 710 residues: Solute carrier organic anion transporter family member 3A1 (710 aa).

Met-1 carries the N-acetylmethionine modification. The disordered stretch occupies residues 1-25; sequence MQAKKPGGSSGGGRSGELQGDEAQR. Over 1–40 the chain is Cytoplasmic; it reads MQAKKPGGSSGGGRSGELQGDEAQRNKKKKKKVSCFSNIK. The helical transmembrane segment at 41 to 60 threads the bilayer; that stretch reads IFLVSECALMLAQGTVGAYL. The Extracellular segment spans residues 61–79; it reads VSVLTTLERRFNLQSADVG. Residues 80–100 traverse the membrane as a helical segment; that stretch reads VIASSFEIGNLALILFVSYFG. The Cytoplasmic portion of the chain corresponds to 101–106; that stretch reads ARGHRP. Residues 107–131 form a helical membrane-spanning segment; sequence RLIGCGGIVMALGALLSALPEFLTH. Topologically, residues 132 to 174 are extracellular; it reads QYKYEAGEIRWGAEGRDVCAANGSGGDQGPDPDLICRSRTATN. The N-linked (GlcNAc...) asparagine glycan is linked to Asn-153. The helical transmembrane segment at 175-203 threads the bilayer; sequence MMYLLLIGAQVLLGIGATPVQPLGVSYID. Topologically, residues 204–222 are cytoplasmic; sequence DHVRRKDSSLYIGILFTML. The helical transmembrane segment at 223–243 threads the bilayer; the sequence is VFGPACGFILGSFCTKIYVDA. The Extracellular portion of the chain corresponds to 244–261; it reads VFIDTSNLDITPDDPRWI. Residues 262 to 286 form a helical membrane-spanning segment; the sequence is GAWWGGFLLCGALLFFSSVLMFGFP. The Cytoplasmic portion of the chain corresponds to 287 to 344; it reads QSLPPHSDPALESEQAMLPEREYERPKPSNGVLRHPLEPDSSASCFQQLRVIPKVTKH. Residues 345–366 traverse the membrane as a helical segment; it reads LLSNPVFTCIILAACMEIAVVA. The Extracellular portion of the chain corresponds to 367-386; sequence GFAAFLGKYLEQQFNLTTSS. Asn-381 carries an N-linked (GlcNAc...) asparagine glycan. A helical membrane pass occupies residues 387–410; sequence ANQLLGMTAIPCACLGIFLGGLLV. Topologically, residues 411–414 are cytoplasmic; it reads KKLS. A helical membrane pass occupies residues 415–438; that stretch reads LSALGAIRMAMLVNLVSTACYVSF. Residues 439–539 lie on the Extracellular side of the membrane; that stretch reads LFLGCDTGPV…PGCQEAFLTF (101 aa). Residue Asn-457 is glycosylated (N-linked (GlcNAc...) asparagine). The 49-residue stretch at 465–513 folds into the Kazal-like domain; sequence LDPYSSCNKNCECQTDSFTPVCGADGITYLSACFAGCNSTNLTGCACLM. 3 disulfides stabilise this stretch: Cys-471-Cys-501, Cys-477-Cys-497, and Cys-486-Cys-511. N-linked (GlcNAc...) asparagine glycosylation is found at Asn-502, Asn-505, and Asn-519. A helical membrane pass occupies residues 540–562; the sequence is LCVMCVCSMIGAMAQTPSVIILI. Residues 563–571 lie on the Cytoplasmic side of the membrane; it reads RTVSPELKS. Residues 572–597 traverse the membrane as a helical segment; the sequence is YALGVLFLLLRLLGFIPPPLIFGAGI. Over 598-630 the chain is Extracellular; that stretch reads DSTCLFWSTFCGEQGACALYDNVAYRYLYVSIA. A helical transmembrane segment spans residues 631-648; that stretch reads IALKSFAFLLYTTTWQCL. Residues 649-705 lie on the Cytoplasmic side of the membrane; the sequence is RKNYKRYIKNHEGGLSTSEFFASTLTLDNLGRDPVPANQTHRTKFIYNLEDHEWCEN.

It belongs to the organo anion transporter (TC 2.A.60) family.

The protein localises to the basolateral cell membrane. Its subcellular location is the apical cell membrane. It localises to the basal cell membrane. It carries out the reaction L-thyroxine(out) = L-thyroxine(in). The enzyme catalyses prostaglandin E1(out) = prostaglandin E1(in). It catalyses the reaction prostaglandin E2(out) = prostaglandin E2(in). The catalysed reaction is prostaglandin F2alpha(out) = prostaglandin F2alpha(in). It carries out the reaction (5Z,8Z,11Z,14Z)-eicosatetraenoate(out) = (5Z,8Z,11Z,14Z)-eicosatetraenoate(in). The enzyme catalyses taurocholate(out) = taurocholate(in). It catalyses the reaction glycocholate(out) = glycocholate(in). The catalysed reaction is estrone 3-sulfate(out) = estrone 3-sulfate(in). It carries out the reaction argipressin(out) = argipressin(in). In terms of biological role, putative organic anion antiporter with apparent broad substrate specificity. Recognizes various substrates including thyroid hormone L-thyroxine, prostanoids such as prostaglandin E1 and E2, bile acids such as taurocholate, glycolate and glycochenodeoxycholate and peptide hormones such as L-arginine vasopressin, likely operating in a tissue-specific manner. The transport mechanism, its electrogenicity and potential tissue-specific counterions remain to be elucidated. The polypeptide is Solute carrier organic anion transporter family member 3A1 (SLCO3A1) (Bos taurus (Bovine)).